Consider the following 249-residue polypeptide: 15,16-dihydrobiliverdin:ferredoxin oxidoreductase (249 aa).

It belongs to the HY2 family.

It catalyses the reaction 15,16-dihydrobiliverdin + oxidized 2[4Fe-4S]-[ferredoxin] = biliverdin IXalpha + reduced 2[4Fe-4S]-[ferredoxin] + 2 H(+). Catalyzes the two-electron reduction of biliverdin IX-alpha at the C15 methine bridge. The polypeptide is 15,16-dihydrobiliverdin:ferredoxin oxidoreductase (Prochlorococcus marinus (strain MIT 9303)).